The following is a 124-amino-acid chain: Protein archease (124 aa).

The Ca(2+) site is built by histidine 7, aspartate 10, aspartate 123, and threonine 124.

This sequence belongs to the archease family.

Functionally, activates the tRNA-splicing ligase complex by facilitating the enzymatic turnover of catalytic subunit RtcB. Acts by promoting the guanylylation of RtcB, a key intermediate step in tRNA ligation. Can also alter the NTP specificity of RtcB such that ATP, dGTP or ITP is used efficiently. May also act as a chaperone or modulator of proteins involved in DNA or RNA processing. This is Protein archease from Thermotoga maritima (strain ATCC 43589 / DSM 3109 / JCM 10099 / NBRC 100826 / MSB8).